Here is a 261-residue protein sequence, read N- to C-terminus: uncharacterized protein (261 aa).

The 127-residue stretch at 135-261 (LVLKRIDEDI…VTEYTIYYSG (127 aa)) folds into the N-acetyltransferase domain.

Belongs to the acetyltransferase family.

This is an uncharacterized protein from Bacillus subtilis (strain 168).